The sequence spans 34 residues: Protamine (34 aa).

Positions Pro1–Arg34 are disordered.

Testis.

The protein resides in the nucleus. Its subcellular location is the chromosome. In terms of biological role, protamines substitute for histones in the chromatin of sperm during the haploid phase of spermatogenesis. They compact sperm DNA into a highly condensed, stable and inactive complex. This chain is Protamine, found in Dicentrarchus labrax (European seabass).